Consider the following 170-residue polypeptide: Photosystem I assembly protein Ycf3 (170 aa).

3 TPR repeats span residues 35 to 68 (AFCYYRDGMSAQSEGEYAEALENYYEALRLEEDP), 72 to 105 (SYIIYNIGLIYASNGEHIKALEYYHQSLELNPRL), and 120 to 153 (GLKAADKQDNNMSKSMFDKAAEYWKQAIYLAPNN).

The protein belongs to the Ycf3 family.

Its subcellular location is the plastid. The protein localises to the chloroplast thylakoid membrane. In terms of biological role, essential for the assembly of the photosystem I (PSI) complex. May act as a chaperone-like factor to guide the assembly of the PSI subunits. In Gracilaria tenuistipitata var. liui (Red alga), this protein is Photosystem I assembly protein Ycf3.